The chain runs to 825 residues: Tuftelin-interacting protein 11 (825 aa).

The interval 1 to 135 (MSMSHLYGKD…RTFAGGIKSN (135 aa)) is disordered. A compositionally biased stretch (acidic residues) spans 11–25 (EDSDGVEMENFEITD). Composition is skewed to basic and acidic residues over residues 41-61 (QTKE…DERP) and 85-114 (PAAE…EAKK). Residues 122-135 (KPSQRTFAGGIKSN) are compositionally biased toward polar residues. The G-patch domain maps to 145-191 (TKGIGQKLLQKMGYVQGRGLGKNAQGIIAPIEAKQRKGKGAVGAYGS).

The protein belongs to the TFP11/STIP family. As to quaternary structure, identified in the spliceosome C complex.

Its subcellular location is the nucleus. In terms of biological role, involved in pre-mRNA splicing, specifically in spliceosome disassembly during late-stage splicing events. The sequence is that of Tuftelin-interacting protein 11 (tfip11) from Xenopus tropicalis (Western clawed frog).